We begin with the raw amino-acid sequence, 117 residues long: Large ribosomal subunit protein bL20 (117 aa).

This sequence belongs to the bacterial ribosomal protein bL20 family.

Functionally, binds directly to 23S ribosomal RNA and is necessary for the in vitro assembly process of the 50S ribosomal subunit. It is not involved in the protein synthesizing functions of that subunit. The chain is Large ribosomal subunit protein bL20 from Chromohalobacter salexigens (strain ATCC BAA-138 / DSM 3043 / CIP 106854 / NCIMB 13768 / 1H11).